The following is a 315-amino-acid chain: Methionyl-tRNA formyltransferase (315 aa).

A (6S)-5,6,7,8-tetrahydrofolate-binding site is contributed by 113-116; it reads SLLP.

It belongs to the Fmt family.

The catalysed reaction is L-methionyl-tRNA(fMet) + (6R)-10-formyltetrahydrofolate = N-formyl-L-methionyl-tRNA(fMet) + (6S)-5,6,7,8-tetrahydrofolate + H(+). In terms of biological role, attaches a formyl group to the free amino group of methionyl-tRNA(fMet). The formyl group appears to play a dual role in the initiator identity of N-formylmethionyl-tRNA by promoting its recognition by IF2 and preventing the misappropriation of this tRNA by the elongation apparatus. The protein is Methionyl-tRNA formyltransferase of Photorhabdus laumondii subsp. laumondii (strain DSM 15139 / CIP 105565 / TT01) (Photorhabdus luminescens subsp. laumondii).